The following is a 408-amino-acid chain: Arginine biosynthesis bifunctional protein ArgJ (408 aa).

The substrate site is built by Thr156, Lys182, Thr193, Glu279, Asn403, and Ser408. The active-site Nucleophile is the Thr193.

The protein belongs to the ArgJ family. As to quaternary structure, heterotetramer of two alpha and two beta chains.

Its subcellular location is the cytoplasm. The catalysed reaction is N(2)-acetyl-L-ornithine + L-glutamate = N-acetyl-L-glutamate + L-ornithine. The enzyme catalyses L-glutamate + acetyl-CoA = N-acetyl-L-glutamate + CoA + H(+). Its pathway is amino-acid biosynthesis; L-arginine biosynthesis; L-ornithine and N-acetyl-L-glutamate from L-glutamate and N(2)-acetyl-L-ornithine (cyclic): step 1/1. The protein operates within amino-acid biosynthesis; L-arginine biosynthesis; N(2)-acetyl-L-ornithine from L-glutamate: step 1/4. Functionally, catalyzes two activities which are involved in the cyclic version of arginine biosynthesis: the synthesis of N-acetylglutamate from glutamate and acetyl-CoA as the acetyl donor, and of ornithine by transacetylation between N(2)-acetylornithine and glutamate. In Bordetella bronchiseptica (strain ATCC BAA-588 / NCTC 13252 / RB50) (Alcaligenes bronchisepticus), this protein is Arginine biosynthesis bifunctional protein ArgJ.